The primary structure comprises 176 residues: Ribosome maturation factor RimM (176 aa).

The region spanning 97-176 (EDDFYWRDLI…QICVDWDPGF (80 aa)) is the PRC barrel domain.

This sequence belongs to the RimM family. Binds ribosomal protein uS19.

Its subcellular location is the cytoplasm. Functionally, an accessory protein needed during the final step in the assembly of 30S ribosomal subunit, possibly for assembly of the head region. Essential for efficient processing of 16S rRNA. May be needed both before and after RbfA during the maturation of 16S rRNA. It has affinity for free ribosomal 30S subunits but not for 70S ribosomes. The sequence is that of Ribosome maturation factor RimM from Colwellia psychrerythraea (strain 34H / ATCC BAA-681) (Vibrio psychroerythus).